A 161-amino-acid polypeptide reads, in one-letter code: Allophycocyanin alpha chain (161 aa).

Position 71 is an N4-methylasparagine (asparagine 71). Position 81 (cysteine 81) interacts with (2R,3E)-phycocyanobilin.

It belongs to the phycobiliprotein family. Component of the phycobilisome. Heterodimer of an alpha and a beta chain. Post-translationally, contains one covalently linked phycocyanobilin chromophore.

It localises to the cellular thylakoid membrane. Its function is as follows. Light-harvesting photosynthetic bile pigment-protein from the phycobiliprotein complex. Allophycocyanin has a maximum absorption at approximately 650 nanometers. The polypeptide is Allophycocyanin alpha chain (apcA) (Arthrospira platensis (Spirulina platensis)).